The chain runs to 397 residues: Phosphoribulokinase, chloroplastic (397 aa).

The transit peptide at 1 to 44 (MAVSAYTVPTTSHLGFNQKKQLFFCNKSAYKRVSFSSRPCVITC) directs the protein to the chloroplast. The cysteines at positions 62 and 101 are disulfide-linked.

This sequence belongs to the phosphoribulokinase family.

Its subcellular location is the plastid. The protein resides in the chloroplast. The enzyme catalyses D-ribulose 5-phosphate + ATP = D-ribulose 1,5-bisphosphate + ADP + H(+). The protein operates within carbohydrate biosynthesis; Calvin cycle. Light regulated via thioredoxin by reversible oxidation/reduction of sulfhydryl/disulfide groups. This Mesembryanthemum crystallinum (Common ice plant) protein is Phosphoribulokinase, chloroplastic.